The primary structure comprises 480 residues: MARLPGHPEVPGAEPGSAVRGGRGGRGARARHVIINVGGCRVRLAWAALARCPLARLERLRACRGHDELLRVCDDYDVSRDEFFFDRSPCAFRAIVALLRAGKLRLLRGPCALAFRDELAYWGIDEARLERCCLRRLRRREEEAAEARATPPARGPQTSPGRALGSGRLERGRRRLRDVVENPHSGLAGKLFAYVSVAFVAVTAVGLCLSTMPDVRAEEERGECSTKCRNLFVLETVCVAWFSFEFLLRSLQAESKCAFLRTPLAIIDILAILPFYVSLLAGLAAGPTGSKMLERAGLVLRLLRALRVLYVMRLARHSLGLRSLGLTVRRCAREFGLLLLFLCVAMALFAPLVHLAERELGAHRDFSSVPASYWWAVISMTTVGYGDMVPRSLPGQVVALSSILSGILLMAFPVTSIFHTFSRSYSELKEQQQRAASPEPVLREDSTRDDSTRSASATEDSSQDPETAGAAGSLPGPVGP.

Disordered regions lie at residues 1–25 (MARLPGHPEVPGAEPGSAVRGGRGG) and 144–167 (AAEARATPPARGPQTSPGRALGSG). The Cytoplasmic segment spans residues 1 to 187 (MARLPGHPEV…DVVENPHSGL (187 aa)). The chain crosses the membrane as a helical span at residues 188-209 (AGKLFAYVSVAFVAVTAVGLCL). Over 210–230 (STMPDVRAEEERGECSTKCRN) the chain is Extracellular. A helical transmembrane segment spans residues 231-252 (LFVLETVCVAWFSFEFLLRSLQ). Over 253-263 (AESKCAFLRTP) the chain is Cytoplasmic. A helical transmembrane segment spans residues 264-284 (LAIIDILAILPFYVSLLAGLA). The Extracellular portion of the chain corresponds to 285–296 (AGPTGSKMLERA). Residues 297–317 (GLVLRLLRALRVLYVMRLARH) traverse the membrane as a helical; Voltage-sensor segment. The Cytoplasmic portion of the chain corresponds to 318–332 (SLGLRSLGLTVRRCA). The helical transmembrane segment at 333–354 (REFGLLLLFLCVAMALFAPLVH) threads the bilayer. Over 355 to 369 (LAERELGAHRDFSSV) the chain is Extracellular. Residues 370-381 (PASYWWAVISMT) constitute an intramembrane region (helical). The Selectivity filter signature appears at 382 to 387 (TVGYGD). The stretch at 382 to 389 (TVGYGDMV) is an intramembrane region. Residues 390–396 (PRSLPGQ) lie on the Extracellular side of the membrane. The chain crosses the membrane as a helical span at residues 397–425 (VVALSSILSGILLMAFPVTSIFHTFSRSY). Residues 426–480 (SELKEQQQRAASPEPVLREDSTRDDSTRSASATEDSSQDPETAGAAGSLPGPVGP) lie on the Cytoplasmic side of the membrane. The tract at residues 429–480 (KEQQQRAASPEPVLREDSTRDDSTRSASATEDSSQDPETAGAAGSLPGPVGP) is disordered. Over residues 441–452 (VLREDSTRDDST) the composition is skewed to basic and acidic residues.

Belongs to the potassium channel family. G (TC 1.A.1.2) subfamily. Kv6.2/KCNG2 sub-subfamily. Heterodimer with KCNB1. As to expression, highly expressed in heart, in particular in right and left atrium, and detected at lower levels in the right and left ventricle.

The protein resides in the cell membrane. In terms of biological role, regulatory alpha-subunit of the voltage-gated potassium (Kv) channel which, when coassembled with KCNB1, can modulate the kinetics and conductance-voltage relationship. Modulates channel activity by shifting the threshold and the half-maximal activation to more negative values. Potassium channel subunit that does not form functional channels by itself. This chain is Voltage-gated potassium channel regulatory subunit KCNG2, found in Rattus norvegicus (Rat).